Consider the following 410-residue polypeptide: Transcription factor SPN1 (410 aa).

The disordered stretch occupies residues 1 to 132 (MSTADQEQPK…SRQELEEKLD (132 aa)). T15 bears the Phosphothreonine mark. Over residues 20–52 (TASSQKSTINAENENTKQNQSMEPQETSKGTSN) the composition is skewed to polar residues. At S23 the chain carries Phosphoserine; by ATM or ATR. A Phosphoserine modification is found at S40. Positions 53–65 (DTKDPDNGEKNEE) are enriched in basic and acidic residues. A Phosphoserine modification is found at S85. Phosphothreonine is present on T86. S89 carries the phosphoserine modification. In terms of domain architecture, TFIIS N-terminal spans 219 to 296 (QSVRIWLEPL…AEWTRPIIGA (78 aa)). The segment at 318 to 346 (KSVMDSAKNRKKKSKSGEDPTSRGSSVQT) is disordered.

The protein belongs to the IWS1 family. As to quaternary structure, interacts with ABD1, RBP1, SPT5 and SPT6.

Its subcellular location is the nucleus. Functionally, transcription factor involved in RNA polymerase II transcription regulation. May function in both SPT15/TBP post-recruitment and recruitment steps of transcription. This Saccharomyces cerevisiae (strain ATCC 204508 / S288c) (Baker's yeast) protein is Transcription factor SPN1 (SPN1).